A 576-amino-acid polypeptide reads, in one-letter code: Mycobactin import ATP-binding/permease protein IrtB (576 aa).

At 1 to 25 (MIRTLIALVPADKRGTLGLYTVLTV) the chain is on the cytoplasmic side. The region spanning 19-299 (LYTVLTVLSV…LSELTPAIES (281 aa)) is the ABC transmembrane type-1 domain. A helical transmembrane segment spans residues 26–46 (LSVVIRAAGTVLLVPLVAALF). The Periplasmic segment spans residues 47-52 (GDTPQD). A helical transmembrane segment spans residues 53-73 (AWPWLGWLTAATAAGWIVDTT). The Cytoplasmic portion of the chain corresponds to 74 to 131 (TSRLGFDLGFAVLDHTQHDVADRMPNIRLDWLTAENTATARAAIASTGPELVGLVVNL). Helical transmembrane passes span 132-152 (LTPLIGAVLLPAAIAVALVAV) and 153-173 (SPPLGLAALAGVVVLLGAMWA). The Cytoplasmic portion of the chain corresponds to 174 to 241 (SNRLSRKADT…RLLAMQIPGQ (68 aa)). Residues 242–262 (LLFSLASQLALILLAGMATWL) form a helical membrane-spanning segment. The Periplasmic segment spans residues 263–267 (TVRGE). Residues 268–288 (LSVPEAVAMIVVVARYLEPFT) form a helical membrane-spanning segment. The Cytoplasmic portion of the chain corresponds to 289–576 (SLSELTPAIE…HEAADWQITH (288 aa)). The region spanning 332-565 (IEFDCVTFGY…GGRFDEFWRR (234 aa)) is the ABC transporter domain. An ATP-binding site is contributed by 364–371 (GPSGSGKS).

The protein belongs to the ABC transporter superfamily. Siderophore-Fe(3+) uptake transporter (SIUT) (TC 3.A.1.21) family. In terms of assembly, forms a heterodimer with IrtA.

The protein localises to the cell inner membrane. Functionally, part of the ABC transporter complex IrtAB involved in the import of iron-bound mycobactin (Fe-MBT) and carboxymycobactin (Fe-cMBT). Has a preference for Fe-MBT over Fe-cMBT. Transmembrane domains (TMD) form a pore in the membrane and the ATP-binding domain (NBD) is responsible for energy generation. The sequence is that of Mycobactin import ATP-binding/permease protein IrtB from Mycolicibacterium smegmatis (strain ATCC 700084 / mc(2)155) (Mycobacterium smegmatis).